We begin with the raw amino-acid sequence, 162 residues long: Meiosis-specific protein HED1 (162 aa).

The disordered stretch occupies residues 67–124 (KNLSENTGGGSPNGGAYLDAKKGVREQDQYQGGPSKELDRLQPPPSMKKSPPRKKKSL). Basic and acidic residues predominate over residues 85–94 (DAKKGVREQD).

In terms of assembly, interacts with RAD51.

It localises to the nucleus. It is found in the chromosome. Functionally, involved in regulation of meiotic recombination and repair of DNA damage. Inhibits RAD51-mediated recombination when the meiotic recombination machinery is impaired. This is Meiosis-specific protein HED1 (HED1) from Saccharomyces cerevisiae (strain ATCC 204508 / S288c) (Baker's yeast).